Reading from the N-terminus, the 1323-residue chain is DNA-directed RNA polymerase subunit beta' (1323 aa).

Residues Cys60, Cys62, Cys75, and Cys78 each contribute to the Zn(2+) site. Positions 535, 537, and 539 each coordinate Mg(2+). Residues Cys894, Cys977, Cys984, and Cys987 each coordinate Zn(2+).

Belongs to the RNA polymerase beta' chain family. In terms of assembly, the RNAP catalytic core consists of 2 alpha, 1 beta, 1 beta' and 1 omega subunit. When a sigma factor is associated with the core the holoenzyme is formed, which can initiate transcription. It depends on Mg(2+) as a cofactor. Requires Zn(2+) as cofactor.

The catalysed reaction is RNA(n) + a ribonucleoside 5'-triphosphate = RNA(n+1) + diphosphate. Its function is as follows. DNA-dependent RNA polymerase catalyzes the transcription of DNA into RNA using the four ribonucleoside triphosphates as substrates. The protein is DNA-directed RNA polymerase subunit beta' of Corynebacterium urealyticum (strain ATCC 43042 / DSM 7109).